Consider the following 286-residue polypeptide: ATP synthase gamma chain (286 aa).

Belongs to the ATPase gamma chain family. F-type ATPases have 2 components, CF(1) - the catalytic core - and CF(0) - the membrane proton channel. CF(1) has five subunits: alpha(3), beta(3), gamma(1), delta(1), epsilon(1). CF(0) has three main subunits: a, b and c.

The protein resides in the cell inner membrane. Its function is as follows. Produces ATP from ADP in the presence of a proton gradient across the membrane. The gamma chain is believed to be important in regulating ATPase activity and the flow of protons through the CF(0) complex. In Pseudomonas fluorescens (strain Pf0-1), this protein is ATP synthase gamma chain.